A 216-amino-acid chain; its full sequence is UPF0548 protein (216 aa).

Belongs to the UPF0548 family.

The polypeptide is UPF0548 protein (Dictyostelium discoideum (Social amoeba)).